The following is a 574-amino-acid chain: Ankyrin repeat protein B18 (574 aa).

6 ANK repeats span residues 56-87 (TGYT…NVTM), 135-164 (IKSR…DPNF), 167-213 (DGYT…NLNA), 217-249 (CGNT…NFKI), 253-285 (HGLT…NVGE), and 327-356 (EGKT…DINA). Positions 541 to 574 (NCLLTLLPSEIIYEILYMLTINDLYNISYPPTKV) constitute an F-box domain.

This Homo sapiens (Human) protein is Ankyrin repeat protein B18.